Consider the following 283-residue polypeptide: MNPSDTHDHGAEASPLGQSVVYRDSYAPELLFPIARQIKRDELGLAPDTLPFVGEDLWNAYELSWLNSRGKPVAAIGTFRVPVTSPRLIESKSLKLYLNSFNQHRFVDPTLVHDTLTRDLSTAAGAPVAVSIEVLSRRPTRVFGYPHGVLLDEIDIEIDTYRTDPAFLQSDFNADEVSETLYSHLLKSNCLVTGQPDWGTIVLRYIGPPIDRAGLLRYIVSFRSHNEFHEQCVERIFCDVLRRCAPRHLAVWARYTRRGGLDINPFRSTGHFTQFDNIAEVRQ.

A substrate-binding site is contributed by 89 to 91 (IES). 91–92 (SK) is an NADPH binding site. Catalysis depends on Cys190, which acts as the Thioimide intermediate. Asp197 serves as the catalytic Proton donor. Residue 229–230 (HE) participates in substrate binding. 258–259 (RG) contributes to the NADPH binding site.

This sequence belongs to the GTP cyclohydrolase I family. QueF type 2 subfamily. Homodimer.

It is found in the cytoplasm. The enzyme catalyses 7-aminomethyl-7-carbaguanine + 2 NADP(+) = 7-cyano-7-deazaguanine + 2 NADPH + 3 H(+). The protein operates within tRNA modification; tRNA-queuosine biosynthesis. In terms of biological role, catalyzes the NADPH-dependent reduction of 7-cyano-7-deazaguanine (preQ0) to 7-aminomethyl-7-deazaguanine (preQ1). The chain is NADPH-dependent 7-cyano-7-deazaguanine reductase from Aromatoleum aromaticum (strain DSM 19018 / LMG 30748 / EbN1) (Azoarcus sp. (strain EbN1)).